A 655-amino-acid polypeptide reads, in one-letter code: p-hydroxybenzoic acid efflux pump subunit AaeB (655 aa).

10 consecutive transmembrane segments (helical) span residues 13–33 (FAVKLATAIVLALFVGFHFQL), 38–58 (WAVLTAAIVAAGPAFAAGGEP), 69–89 (LRIIGTFIGCIAGLVIIIAMI), 93–113 (LLMILVCCIWAGFCTWISSLV), 121–141 (WGLAGYTALIIVITIQPEPLL), 152–172 (EIVIGIVCAIMADLLFSPRSI), 370–390 (LFWLWTGWTSGSGVMVMIAVV), 407–427 (FIYGTLAALPLGLLYFLVIIP), 431–451 (QSMLLLCISLAVLGFFLGIEV), and 482–502 (FLDSALGQIVGCVLAFTVILL).

The protein belongs to the aromatic acid exporter ArAE (TC 2.A.85) family.

It localises to the cell inner membrane. Functionally, forms an efflux pump with AaeA. Could function as a metabolic relief valve, allowing to eliminate certain compounds when they accumulate to high levels in the cell. The protein is p-hydroxybenzoic acid efflux pump subunit AaeB of Shigella dysenteriae serotype 1 (strain Sd197).